Reading from the N-terminus, the 620-residue chain is GTP-binding protein At3g49725, chloroplastic (620 aa).

A chloroplast-targeting transit peptide spans 1–65; that stretch reads MSVTTSFGIW…SSFLARDRLR (65 aa). The tract at residues 57–100 is disordered; sequence SFLARDRLRSKTPSSSPFSSKRHTPKTSEIEEESTPKDSVLLNP. The Hflx-type G domain occupies 346–585; sequence GTIAVVGYTN…LIDDKMKEKK (240 aa). GTP is bound by residues 352–359, 377–381, 399–402, and 468–471; these read GYTNAGKS, FATLD, DTVG, and NKID. Mg(2+) contacts are provided by Ser359 and Thr379. Composition is skewed to acidic residues over residues 478-497 and 511-521; these read EEEK…EDEA and TVDEDQIQNGD. Residues 478 to 521 form a disordered region; sequence EEEKYLDDGEGVGEEDEDEADLKAEETVDASEATVDEDQIQNGD. GTP is bound at residue 563-565; sequence SAL. Residues 597–620 form a disordered region; the sequence is LHKRKWRPPRNDDEEERLIPLDQR.

Belongs to the TRAFAC class OBG-HflX-like GTPase superfamily. HflX GTPase family. Requires Mg(2+) as cofactor.

Its subcellular location is the plastid. The protein resides in the chloroplast. This Arabidopsis thaliana (Mouse-ear cress) protein is GTP-binding protein At3g49725, chloroplastic.